Here is a 503-residue protein sequence, read N- to C-terminus: Transcription termination/antitermination protein NusA (503 aa).

The S1 motif domain occupies 140–206 (GELVIGVVKR…RGPQLLVSRT (67 aa)). Residues 308 to 374 (SHTMDIAVNK…FMEKLDVDEE (67 aa)) enclose the KH domain.

The protein belongs to the NusA family. As to quaternary structure, monomer. Binds directly to the core enzyme of the DNA-dependent RNA polymerase and to nascent RNA.

The protein localises to the cytoplasm. Participates in both transcription termination and antitermination. The sequence is that of Transcription termination/antitermination protein NusA from Coxiella burnetii (strain RSA 493 / Nine Mile phase I).